The following is a 952-amino-acid chain: Glycine dehydrogenase (decarboxylating) (952 aa).

Lys-696 carries the N6-(pyridoxal phosphate)lysine modification.

This sequence belongs to the GcvP family. As to quaternary structure, the glycine cleavage system is composed of four proteins: P, T, L and H. Pyridoxal 5'-phosphate is required as a cofactor.

It catalyses the reaction N(6)-[(R)-lipoyl]-L-lysyl-[glycine-cleavage complex H protein] + glycine + H(+) = N(6)-[(R)-S(8)-aminomethyldihydrolipoyl]-L-lysyl-[glycine-cleavage complex H protein] + CO2. In terms of biological role, the glycine cleavage system catalyzes the degradation of glycine. The P protein binds the alpha-amino group of glycine through its pyridoxal phosphate cofactor; CO(2) is released and the remaining methylamine moiety is then transferred to the lipoamide cofactor of the H protein. In Pelagibacter ubique (strain HTCC1062), this protein is Glycine dehydrogenase (decarboxylating).